Reading from the N-terminus, the 487-residue chain is uncharacterized protein (487 aa).

3 helical membrane-spanning segments follow: residues 10–30, 45–65, and 439–459; these read AALMGALAVVLITAAPVAADA, VISPVAIPCVALGKFADAVAA, and APVVFAGAALACTAIGADFTL.

The protein resides in the cell membrane. This is an uncharacterized protein from Mycobacterium tuberculosis (strain CDC 1551 / Oshkosh).